We begin with the raw amino-acid sequence, 79 residues long: Antimicrobial peptide ToAP2 (79 aa).

A signal peptide spans 1-23 (MQFKKQLLVIFFAYFLVVNESEA). A propeptide spanning residues 50–79 (SLMKRELKNLYDPYQRSVEMERLLKELPLY) is cleaved from the precursor.

It belongs to the non-disulfide-bridged peptide (NDBP) superfamily. Medium-length antimicrobial peptide (group 3) family. Expressed by the venom gland.

It localises to the secreted. Its subcellular location is the target cell membrane. Functionally, antimicrobial peptide. Shows antibacterial activity against all M.massiliense bacterial strains tested. Has antifungal activity against Candida spp. and two Cryptococcus neoformans strains with MICs values ranging from 6.25 to 200 uM. Also shows an inhibitory activity on C.albicans biofilms at high concentrations. Exhibits chemotactic activity for monocytes, neutrophils, and eosinophils. Shows low cytotoxic activity and has weak hemolytic activity on human erythrocytes. In vivo, treatment of infected mice with M.massiliense reduces the bacterial load in the liver, lung, and spleen. May act by disrupting the integrity of the bacterial cell membrane. This chain is Antimicrobial peptide ToAP2, found in Tityus obscurus (Amazonian scorpion).